A 223-amino-acid polypeptide reads, in one-letter code: Cytidylate kinase (223 aa).

10–18 (GPASSGKST) contacts ATP.

Belongs to the cytidylate kinase family. Type 1 subfamily.

Its subcellular location is the cytoplasm. The enzyme catalyses CMP + ATP = CDP + ADP. It carries out the reaction dCMP + ATP = dCDP + ADP. This Streptococcus pneumoniae (strain 70585) protein is Cytidylate kinase.